We begin with the raw amino-acid sequence, 231 residues long: uncharacterized protein (231 aa).

NADP(+) is bound at residue 10–34 (IITGASSGIGAATAKALEKQGVKVV). Serine 140 provides a ligand contact to substrate. Catalysis depends on tyrosine 153, which acts as the Proton acceptor.

This sequence belongs to the short-chain dehydrogenases/reductases (SDR) family.

This is an uncharacterized protein from Staphylococcus haemolyticus (strain JCSC1435).